The following is a 138-amino-acid chain: Proofreading thioesterase EntH (138 aa).

The Nucleophile or proton acceptor role is filled by Glu64.

This sequence belongs to the thioesterase PaaI family. As to quaternary structure, homotetramer. Dimer of dimers. Interacts specifically with the aryl carrier protein (ArCP) domain of EntB.

Its subcellular location is the cytoplasm. The protein operates within siderophore biosynthesis; enterobactin biosynthesis. Its function is as follows. Required for optimal enterobactin synthesis. Acts as a proofreading enzyme that prevents EntB misacylation by hydrolyzing the thioester bound existing between EntB and wrongly charged molecules. The chain is Proofreading thioesterase EntH from Salmonella arizonae (strain ATCC BAA-731 / CDC346-86 / RSK2980).